Reading from the N-terminus, the 407-residue chain is Protein COS9 (407 aa).

Helical transmembrane passes span 75–95, 98–118, and 261–281; these read TWLL…IKSI, IFPF…LPNI, and IFNL…YVSW.

This sequence belongs to the DUP/COS family.

The protein localises to the membrane. The polypeptide is Protein COS9 (COS9) (Saccharomyces cerevisiae (strain ATCC 204508 / S288c) (Baker's yeast)).